Reading from the N-terminus, the 193-residue chain is Ion-translocating oxidoreductase complex subunit A (193 aa).

6 consecutive transmembrane segments (helical) span residues 5–25 (LLLF…FLGL), 47–67 (FVIT…LLPL), 72–92 (LRTM…EMVV), 102–122 (LLGI…VPLL), 134–154 (AIYG…FAGV), and 171–191 (SIAL…AGLV).

The protein belongs to the NqrDE/RnfAE family. The complex is composed of six subunits: RnfA, RnfB, RnfC, RnfD, RnfE and RnfG.

The protein resides in the cell inner membrane. Part of a membrane-bound complex that couples electron transfer with translocation of ions across the membrane. The polypeptide is Ion-translocating oxidoreductase complex subunit A (Erwinia tasmaniensis (strain DSM 17950 / CFBP 7177 / CIP 109463 / NCPPB 4357 / Et1/99)).